A 928-amino-acid chain; its full sequence is Probable outer membrane protein pmp11 (928 aa).

An N-terminal signal peptide occupies residues 1 to 24 (MKTSIPWVLVSSVLAFSCHLQSLA). The region spanning 627 to 928 (GMEHKQGFWV…NVDVGTKLRF (302 aa)) is the Autotransporter domain.

This sequence belongs to the PMP outer membrane protein family.

The protein resides in the secreted. The protein localises to the cell wall. It is found in the cell outer membrane. This Chlamydia pneumoniae (Chlamydophila pneumoniae) protein is Probable outer membrane protein pmp11 (pmp11).